The primary structure comprises 58 residues: Large ribosomal subunit protein bL32c (58 aa).

This sequence belongs to the bacterial ribosomal protein bL32 family.

It is found in the plastid. It localises to the chloroplast. This Adiantum capillus-veneris (Maidenhair fern) protein is Large ribosomal subunit protein bL32c (rpl32).